The sequence spans 146 residues: MKIYVDADACPVKDVIIFEATKAEIPVTLVTSFSHYSNAEQPKGVETIYVDSGADAADYRIMQLAQKEDLIITQDYGLASLALAKGCIVLHHKGYKYTNDNIEQLLQTRYLSAMVRKSGKRTKGPKPFTAEDKEKFRALFKSFIAR.

This sequence belongs to the UPF0178 family.

In Bacillus cereus (strain AH187), this protein is UPF0178 protein BCAH187_A3092.